Reading from the N-terminus, the 78-residue chain is MSRLLALLILVIPGAISALGIKLMRDTLFGHTIKPFSALWLQGLSGFIFFAIGLYVLAGFILYRDRKRNQVSPRFRKR.

Transmembrane regions (helical) follow at residues 5-24 (LALLILVIPGAISALGIKLM) and 39-61 (LWLQGLSGFIFFAIGLYVLAGFI).

It is found in the cell membrane. This is an uncharacterized protein from Bacillus subtilis (strain 168).